The chain runs to 357 residues: CD4+ T-cell-stimulating antigen (357 aa).

An N-terminal signal peptide occupies residues 1–22; the sequence is MKKRTFALALSMIIASGVILGA. Cys-23 carries the N-palmitoyl cysteine lipid modification. Cys-23 carries the S-diacylglycerol cysteine lipid modification.

It belongs to the BMP lipoprotein family.

Its subcellular location is the cell membrane. In Listeria monocytogenes serovar 1/2a (strain ATCC BAA-679 / EGD-e), this protein is CD4+ T-cell-stimulating antigen (tcsA).